Reading from the N-terminus, the 490-residue chain is Inosine-5'-monophosphate dehydrogenase (490 aa).

CBS domains follow at residues 96–154 (MIIN…SKPV) and 158–218 (MTKE…CKDE). Residues Asp-252 and 302 to 304 (GVG) contribute to the NAD(+) site. Residues Gly-304 and Gly-306 each contribute to the K(+) site. Residue Ser-307 participates in IMP binding. Residue Cys-309 coordinates K(+). Cys-309 functions as the Thioimidate intermediate in the catalytic mechanism. IMP contacts are provided by residues 342-344 (DGG), 365-366 (GN), and 389-393 (YRGMG). Arg-406 (proton acceptor) is an active-site residue. Glu-418 provides a ligand contact to IMP. 3 residues coordinate K(+): Glu-472, Ser-473, and His-474.

The protein belongs to the IMPDH/GMPR family. Homotetramer. The cofactor is K(+).

It carries out the reaction IMP + NAD(+) + H2O = XMP + NADH + H(+). It functions in the pathway purine metabolism; XMP biosynthesis via de novo pathway; XMP from IMP: step 1/1. Its activity is regulated as follows. Mycophenolic acid (MPA) is a non-competitive inhibitor that prevents formation of the closed enzyme conformation by binding to the same site as the amobile flap. In contrast, mizoribine monophosphate (MZP) is a competitive inhibitor that induces the closed conformation. MPA is a potent inhibitor of mammalian IMPDHs but a poor inhibitor of the bacterial enzymes. MZP is a more potent inhibitor of bacterial IMPDH. Its function is as follows. Catalyzes the conversion of inosine 5'-phosphate (IMP) to xanthosine 5'-phosphate (XMP), the first committed and rate-limiting step in the de novo synthesis of guanine nucleotides, and therefore plays an important role in the regulation of cell growth. The protein is Inosine-5'-monophosphate dehydrogenase of Aquifex aeolicus (strain VF5).